The following is a 124-amino-acid chain: Small ribosomal subunit protein uS13 (124 aa).

Positions R94–R124 are disordered.

It belongs to the universal ribosomal protein uS13 family. In terms of assembly, part of the 30S ribosomal subunit. Forms a loose heterodimer with protein S19. Forms two bridges to the 50S subunit in the 70S ribosome.

Located at the top of the head of the 30S subunit, it contacts several helices of the 16S rRNA. In the 70S ribosome it contacts the 23S rRNA (bridge B1a) and protein L5 of the 50S subunit (bridge B1b), connecting the 2 subunits; these bridges are implicated in subunit movement. Contacts the tRNAs in the A and P-sites. The protein is Small ribosomal subunit protein uS13 of Mycobacterium tuberculosis (strain ATCC 25177 / H37Ra).